The sequence spans 127 residues: uncharacterized protein (127 aa).

Disordered stretches follow at residues 1–22 (MLPA…KMKG) and 53–106 (LVGK…PGPK). Residues 76–95 (PNGEAHAEQARRKISVEEKQ) are compositionally biased toward basic and acidic residues.

The protein localises to the mitochondrion. This is an uncharacterized protein from Arabidopsis thaliana (Mouse-ear cress).